The chain runs to 139 residues: Small ribosomal subunit protein uS11 (139 aa).

Disordered stretches follow at residues 1 to 33 (MPPA…AAHI) and 118 to 139 (GAIS…RRRV). The span at 14-23 (KGQKTRRREK) shows a compositional bias: basic residues.

Belongs to the universal ribosomal protein uS11 family. As to quaternary structure, part of the 30S ribosomal subunit. Interacts with proteins S7 and S18. Binds to IF-3.

Its function is as follows. Located on the platform of the 30S subunit, it bridges several disparate RNA helices of the 16S rRNA. Forms part of the Shine-Dalgarno cleft in the 70S ribosome. In Mycobacterium tuberculosis (strain ATCC 25177 / H37Ra), this protein is Small ribosomal subunit protein uS11.